We begin with the raw amino-acid sequence, 84 residues long: MKTLLLTLVVVTIVCLDLGYTRKCLNTPLPLIYKTCPIGQDRCIKMTIKKLPSKYDVIRGCIDICPKSSADVEVLCCDTNKCNK.

Positions 1 to 21 are cleaved as a signal peptide; it reads MKTLLLTLVVVTIVCLDLGYT. Cystine bridges form between C24/C43, C36/C61, C65/C76, and C77/C82.

The protein belongs to the three-finger toxin family. Short-chain subfamily. Aminergic toxin sub-subfamily. Expressed by the venom gland.

It is found in the secreted. Functionally, acts as a beta-blocker by binding to beta-1 and beta-2 adrenergic receptors (ADRB1 and ADRB2). It dose-dependently decreases the heart rate (bradycardia), whereas conventional cardiotoxins increases it. At 100 mg/kg, intraperitoneal injection into mice provokes labored breathing, impaired locomotion, lack of response to external stimuli, and death (after 30 minutes). The chain is Beta-cardiotoxin CTX9 from Ophiophagus hannah (King cobra).